The following is a 55-amino-acid chain: Caltrin-like protein 2 (55 aa).

The 49-residue stretch at 7–55 (AINRPGSCPRVMIYCPARHPPNKCTSDYDCPKPQKCCPGYCGKQCYQPE) folds into the WAP domain.

In terms of processing, glycosylated.

Inhibits calcium transport into spermatozoa. In Cavia porcellus (Guinea pig), this protein is Caltrin-like protein 2.